The sequence spans 306 residues: Putative transcriptional regulator (306 aa).

Residues 1–61 (MIKRNLNDLL…TRTTRSVSPT (61 aa)) form the HTH lysR-type domain. Positions 21–40 (FTRAAAQLGVTQSALSQSIS) form a DNA-binding region, H-T-H motif.

This sequence belongs to the LysR transcriptional regulatory family.

Its function is as follows. May have a role in the regulation of oprD expression. The chain is Putative transcriptional regulator from Pseudomonas aeruginosa (strain ATCC 15692 / DSM 22644 / CIP 104116 / JCM 14847 / LMG 12228 / 1C / PRS 101 / PAO1).